Reading from the N-terminus, the 130-residue chain is Methylglyoxal synthase (130 aa).

The 130-residue stretch at 1–130 (MSKPRIALIA…DLARNMQDVC (130 aa)) folds into the MGS-like domain. Residues His-11, Lys-15, 37-40 (TGTT), and 57-58 (SG) contribute to the substrate site. Asp-63 (proton donor/acceptor) is an active-site residue. His-90 contributes to the substrate binding site.

The protein belongs to the methylglyoxal synthase family.

The catalysed reaction is dihydroxyacetone phosphate = methylglyoxal + phosphate. Its function is as follows. Catalyzes the formation of methylglyoxal from dihydroxyacetone phosphate. The polypeptide is Methylglyoxal synthase (Burkholderia ambifaria (strain MC40-6)).